A 464-amino-acid chain; its full sequence is Protein FAM90A14 (464 aa).

Disordered regions lie at residues 1–42, 70–389, and 411–437; these read MMAR…DPRL, PATL…HDGA, and APSFHSPEKPGAFLAQSPHVSEKSEAP. Basic and acidic residues-rich tracts occupy residues 74–89 and 97–114; these read GKKEGKENLKPWKPRV and NKDKGEKEERPRQQDPQR. A compositionally biased stretch (low complexity) spans 180-197; that stretch reads LASLSPLRKASLSSSSSL.

This sequence belongs to the FAM90 family.

This Homo sapiens (Human) protein is Protein FAM90A14.